The following is an 89-amino-acid chain: Neurotoxin LmNaTx28 (89 aa).

The first 18 residues, 1–18 (MNLPTVLCIIALILGVRS), serve as a signal peptide directing secretion. One can recognise an LCN-type CS-alpha/beta domain in the interval 20-85 (KNGFFTKLGK…VADSSEKACQ (66 aa)). 4 disulfide bridges follow: Cys-33–Cys-57, Cys-43–Cys-62, Cys-47–Cys-64, and Cys-58–Cys-84.

It belongs to the long (4 C-C) scorpion toxin superfamily. Sodium channel inhibitor family. Beta subfamily. Expressed by the venom gland.

Its subcellular location is the secreted. In terms of biological role, binds voltage-independently at site-4 of sodium channels (Nav) and shift the voltage of activation toward more negative potentials thereby affecting sodium channel activation and promoting spontaneous and repetitive firing. This chain is Neurotoxin LmNaTx28, found in Lychas mucronatus (Chinese swimming scorpion).